A 154-amino-acid polypeptide reads, in one-letter code: Ribonuclease H (154 aa).

Residues 1–141 (MKRIEAYTDG…ADELARAGME (141 aa)) form the RNase H type-1 domain. Mg(2+) is bound by residues Asp9, Glu47, Asp69, and Asp133.

Belongs to the RNase H family. As to quaternary structure, monomer. Mg(2+) is required as a cofactor.

The protein localises to the cytoplasm. The enzyme catalyses Endonucleolytic cleavage to 5'-phosphomonoester.. In terms of biological role, endonuclease that specifically degrades the RNA of RNA-DNA hybrids. This chain is Ribonuclease H, found in Brucella abortus (strain 2308).